The following is a 334-amino-acid chain: GTPase Obg (334 aa).

Residues M1 to L159 form the Obg domain. One can recognise an OBG-type G domain in the interval A160–Q331. Residues G166 to S173, F191 to Y195, D212 to G215, N282 to D285, and S312 to A314 each bind GTP. Mg(2+) is bound by residues S173 and T193.

This sequence belongs to the TRAFAC class OBG-HflX-like GTPase superfamily. OBG GTPase family. Monomer. Requires Mg(2+) as cofactor.

It localises to the cytoplasm. Functionally, an essential GTPase which binds GTP, GDP and possibly (p)ppGpp with moderate affinity, with high nucleotide exchange rates and a fairly low GTP hydrolysis rate. Plays a role in control of the cell cycle, stress response, ribosome biogenesis and in those bacteria that undergo differentiation, in morphogenesis control. The protein is GTPase Obg of Francisella tularensis subsp. mediasiatica (strain FSC147).